Here is a 240-residue protein sequence, read N- to C-terminus: Mannosyl-D-glycerate transport/metabolism system repressor MngR (240 aa).

Residues 4–72 enclose the HTH gntR-type domain; sequence KPLYRQIADR…QGSGTYVKEE (69 aa). The segment at residues 32–51 is a DNA-binding region (H-T-H motif); it reads ESALQTEFGVSRVTVRQALR.

Functionally, represses mngA and mngB. Regulates its own expression. The polypeptide is Mannosyl-D-glycerate transport/metabolism system repressor MngR (mngR) (Escherichia coli (strain K12)).